The primary structure comprises 31 residues: Photosystem II reaction center protein M (31 aa).

Residues 5–25 traverse the membrane as a helical segment; that stretch reads ILALMATALFIIIPTAFLIIL.

Belongs to the PsbM family. As to quaternary structure, PSII is composed of 1 copy each of membrane proteins PsbA, PsbB, PsbC, PsbD, PsbE, PsbF, PsbH, PsbI, PsbJ, PsbK, PsbL, PsbM, PsbT, PsbX, PsbY, PsbZ, Psb30/Ycf12, at least 3 peripheral proteins of the oxygen-evolving complex and a large number of cofactors. It forms dimeric complexes.

The protein resides in the plastid. It localises to the chloroplast thylakoid membrane. Its function is as follows. One of the components of the core complex of photosystem II (PSII). PSII is a light-driven water:plastoquinone oxidoreductase that uses light energy to abstract electrons from H(2)O, generating O(2) and a proton gradient subsequently used for ATP formation. It consists of a core antenna complex that captures photons, and an electron transfer chain that converts photonic excitation into a charge separation. This subunit is found at the monomer-monomer interface. This chain is Photosystem II reaction center protein M, found in Mesostigma viride (Green alga).